The chain runs to 259 residues: Global transcriptional regulator CodY (259 aa).

The segment at 1–155 (MNLLEKTRQL…SATVVGMEIL (155 aa)) is GAF domain. A DNA-binding region (H-T-H motif) is located at residues 203–222 (ASKIADRVGITRSVIVNALR).

It belongs to the CodY family.

It is found in the cytoplasm. DNA-binding global transcriptional regulator which is involved in the adaptive response to starvation and acts by directly or indirectly controlling the expression of numerous genes in response to nutrient availability. During rapid exponential growth, CodY is highly active and represses genes whose products allow adaptation to nutrient depletion. In Exiguobacterium sp. (strain ATCC BAA-1283 / AT1b), this protein is Global transcriptional regulator CodY.